The chain runs to 348 residues: Killer cell immunoglobulin-like receptor 2DL2 (348 aa).

The first 21 residues, 1–21 (MSLMVVSMACVGFFLLQGAWP), serve as a signal peptide directing secretion. At 22–245 (HEGVHRKPSL…SKTGNPRHLH (224 aa)) the chain is on the extracellular side. Ig-like C2-type domains lie at 42–107 (EETV…VTHS) and 142–205 (GESV…FRDS). 2 cysteine pairs are disulfide-bonded: cysteine 49–cysteine 100 and cysteine 149–cysteine 198. Asparagine 84, asparagine 178, and asparagine 211 each carry an N-linked (GlcNAc...) asparagine glycan. Residues 246 to 264 (ILIGTSVVIILFILLFFLL) form a helical membrane-spanning segment. The Cytoplasmic segment spans residues 265–348 (HRWCSNKKNA…ESRSKVVSCP (84 aa)).

Belongs to the immunoglobulin superfamily.

Its subcellular location is the cell membrane. Functionally, receptor on natural killer (NK) cells for HLA-Cw1, 3, 7, and 8 allotypes. Inhibits the activity of NK cells thus preventing cell lysis. The polypeptide is Killer cell immunoglobulin-like receptor 2DL2 (Homo sapiens (Human)).